Reading from the N-terminus, the 298-residue chain is Aclacinomycin methylesterase RdmC (298 aa).

The region spanning 24–277 is the AB hydrolase-1 domain; sequence PALLLVMGGN…LAEIPGMGHA (254 aa). Active-site residues include serine 102, aspartate 248, and histidine 276.

Belongs to the AB hydrolase superfamily. Hydrolase RdmC family. In terms of assembly, monomer.

It catalyses the reaction aclacinomycin T + H2O = 15-demethylaclacinomycin T + methanol. It participates in antibiotic biosynthesis; aclacinomycin biosynthesis. Its function is as follows. Involved in the biosynthesis of the anthracycline aclacinomycin which is an aromatic polyketide antibiotic that exhibits high cytotoxicity and is widely applied in the chemotherapy of a variety of cancers. Catalyzes the removal of the methoxy group from the C-15 position of aclacinomycin T and A to yield 15-demethoxyaclacinomycin T and A, respectively. The protein is Aclacinomycin methylesterase RdmC (rdmC) of Streptomyces purpurascens.